We begin with the raw amino-acid sequence, 172 residues long: Shikimate kinase 2 (172 aa).

9–16 (GARAAGKT) contributes to the ATP binding site.

It belongs to the shikimate kinase family.

It localises to the cytoplasm. The catalysed reaction is shikimate + ATP = 3-phosphoshikimate + ADP + H(+). The protein operates within metabolic intermediate biosynthesis; chorismate biosynthesis; chorismate from D-erythrose 4-phosphate and phosphoenolpyruvate: step 5/7. In Syntrophotalea carbinolica (strain DSM 2380 / NBRC 103641 / GraBd1) (Pelobacter carbinolicus), this protein is Shikimate kinase 2.